Reading from the N-terminus, the 82-residue chain is MGIKTLIIFFHIFILAVLSSNNIILTSGAEIKKFSYDHCFHLCVAGEYGSNECFVDCAQKGFWHGDCANRTEKDPIRCCCYN.

Residues 1–28 (MGIKTLIIFFHIFILAVLSSNNIILTSG) form the signal peptide. 4 cysteine pairs are disulfide-bonded: Cys-39–Cys-80, Cys-43–Cys-67, Cys-53–Cys-78, and Cys-57–Cys-79.

The protein belongs to the DEFL family.

The protein localises to the secreted. This is Putative defensin-like protein 48 from Arabidopsis thaliana (Mouse-ear cress).